Consider the following 514-residue polypeptide: Transmembrane protein 151B (514 aa).

The segment at 1-40 (MSAEGEPAEAVAETPANSPGEEAAAAAATTDVDVREEQRP) is disordered. 3 helical membrane passes run 57-77 (CLLL…CQVT), 104-124 (YVYI…VECW), and 286-306 (PWYV…SWPL).

It belongs to the TMEM151 family.

It localises to the membrane. This is Transmembrane protein 151B (tmem151b) from Xenopus tropicalis (Western clawed frog).